The following is a 321-amino-acid chain: Replication factor C small subunit (321 aa).

43–50 (GFAGVGKT) lines the ATP pocket.

It belongs to the activator 1 small subunits family. RfcS subfamily. As to quaternary structure, heteromultimer composed of small subunits (RfcS) and large subunits (RfcL).

Its function is as follows. Part of the RFC clamp loader complex which loads the PCNA sliding clamp onto DNA. The sequence is that of Replication factor C small subunit from Methanosphaera stadtmanae (strain ATCC 43021 / DSM 3091 / JCM 11832 / MCB-3).